A 1232-amino-acid chain; its full sequence is MANGVIPPPGGASPLPQVRVPLEEPPLSPDVEEEDDDLGKTLAVSRFGDLISKPPAWDPEKPSRSYSERDFEFHRHTSHHTHHPLSARLPPPHKLRRLPPTSARHTRRKRKKEKTSAPPSEETPPIQEEGGAGVEEEEEEEEEEEGESEAEPVEPPPSGTPQKAKFSIGSDEDDSPGLPGRAAVTKPLPSVGPQTDKSPQHSSSSPSPRAQASRLAGEKSRPWSPSASYDLRERLCPGSALGNSGGPEQQVPTDEAEAQMLGSADLDDMKSHRLEDNPGVRRHLVKKPSRTQGGRGSPSGLAPILRRKKKKKKLDRRPHEVFVELNELMLDRSQEPHWRETARWIKFEEDVEEETERWGKPHVASLSFRSLLELRRTIAHGAALLDLEQTTLPGIAHLVVETMIVSDQIRPEDRASVLRTLLLKHSHPNDDKDSGFFPRNPSSSSMNSVLGNHHPTPSHGPDGAVPTMADDLGEPAPLWPHDPDAKEKPLHMPGGDGHRGKSLKLLEKIPEDAEATVVLVGCVPFLEQPAAAFVRLNEAVLLESVLEVPVPVCFLFVMLGPSHTSTDYHELGRSIATLMSDKLFHEAAYQADDRQDLLSAISEFLDGSIVIPPSEVEGRDLLRSVAAFQRELLRKRREREQTKVEMTTRGGYTAPGKELSLELGGSEATPEDDPLLRTGSVFGGLVRDVRRRYPHYPSDLRDALHSQCVAAVLFIYFAALSPAITFGGLLGEKTEGLMGVSELIVSTAVLGVLFSLLGAQPLLVVGFSGPLLVFEEAFFKFCRAQDLEYLTGRVWVGLWLVVFVLALVAAEGSFLVRYISPFTQEIFAFLISLIFIYETFYKLYKVFTEHPLLPFYPPEGALEGSLDAGLEPNGSALPPTEGPPSPRNQPNTALLSLILMLGTFFIAFFLRKFRNSRFLGGKARRIIGDFGIPISILVMVLVDYSITDTYTQKLTVPTGLSVTPPDKRSWFIPPLGSARPFPPWMMVAAAVPALLVLILIFMETQITALIVSQKARRLLKGSGFHLDLLLIGSLGGLCGLFGLPWLTAATVRSVTHVNALTVMRTAIAPGDKPQIQEVREQRVTGVLIASLVGLSIVMGAVLRRIPLAVLFGIFLYMGVTSLSGIQLSQRLLLILMPAKHHPEQPYVTKVKTWRMHLFICIQLGCIALLWVVKSTAASLAFPFLLLLTVPLRHCLLPRLFQDRELQALDSEDAEPNFDEDGQDEYNELHMPV.

Positions 1–11 (MANGVIPPPGG) are enriched in pro residues. 2 disordered regions span residues 1-316 (MANG…KLDR) and 429-498 (NDDK…GDGH). Over 1-708 (MANGVIPPPG…DLRDALHSQC (708 aa)) the chain is Cytoplasmic. A compositionally biased stretch (basic and acidic residues) spans 58 to 75 (DPEKPSRSYSERDFEFHR). 2 stretches are compositionally biased toward basic residues: residues 76 to 97 (HTSH…KLRR) and 104 to 113 (RHTRRKRKKE). Positions 134–152 (VEEEEEEEEEEEGESEAEP) are enriched in acidic residues. Phosphoserine occurs at positions 167, 170, 175, and 198. Residues 200–214 (QHSSSSPSPRAQASR) are compositionally biased toward low complexity. The segment covering 267–279 (DDMKSHRLEDNPG) has biased composition (basic and acidic residues). A compositionally biased stretch (basic residues) spans 280 to 289 (VRRHLVKKPS). Omega-N-methylarginine is present on Arg-295. The span at 305–316 (LRRKKKKKKLDR) shows a compositional bias: basic residues. The segment covering 440 to 450 (NPSSSSMNSVL) has biased composition (polar residues). Residues 481 to 498 (HDPDAKEKPLHMPGGDGH) show a composition bias toward basic and acidic residues. Helical transmembrane passes span 709–731 (VAAV…GLLG), 737–774 (LMGV…LLVF), 794–816 (VWVG…SFLV), 826–847 (IFAF…YKVF), and 893–910 (ALLS…AFFL). The tract at residues 709 to 1232 (VAAVLFIYFA…DEYNELHMPV (524 aa)) is membrane (anion exchange). Topologically, residues 911-925 (RKFRNSRFLGGKARR) are cytoplasmic. The next 5 helical transmembrane spans lie at 926 to 946 (IIGD…DYSI), 980 to 1002 (PFPP…LIFM), 1028 to 1049 (LLLI…LTAA), 1083 to 1128 (VTGV…IQLS), and 1155 to 1191 (MHLF…TVPL). A lipid anchor (S-palmitoyl cysteine) is attached at Cys-1165.

This sequence belongs to the anion exchanger (TC 2.A.31) family.

It is found in the cell membrane. It carries out the reaction hydrogencarbonate(in) + chloride(out) = hydrogencarbonate(out) + chloride(in). In terms of biological role, sodium-independent anion exchanger which mediates the electroneutral exchange of chloride for bicarbonate ions across the cell membrane. May be involved in the regulation of intracellular pH, and the modulation of cardiac action potential. In Pongo abelii (Sumatran orangutan), this protein is Anion exchange protein 3 (SLC4A3).